A 240-amino-acid polypeptide reads, in one-letter code: Ribonuclease HII (240 aa).

The RNase H type-2 domain maps to 7–215; it reads RYAIGIDEAG…LKRIAPGWYV (209 aa). A divalent metal cation contacts are provided by Asp13, Glu14, and Asp112.

This sequence belongs to the RNase HII family. Requires Mn(2+) as cofactor. The cofactor is Mg(2+).

The protein localises to the cytoplasm. It catalyses the reaction Endonucleolytic cleavage to 5'-phosphomonoester.. Its function is as follows. Endonuclease that specifically degrades the RNA of RNA-DNA hybrids. In Hyperthermus butylicus (strain DSM 5456 / JCM 9403 / PLM1-5), this protein is Ribonuclease HII.